The chain runs to 393 residues: Putative odorant receptor 69a, isoform B (393 aa).

Over 1-39 the chain is Cytoplasmic; it reads MQLEDFMRYPDLVCQAAQLPRYTWNGRRSLEVKRNLAKR. A helical membrane pass occupies residues 40 to 60; the sequence is IIFWLGAVNLVYHNIGCVMYG. Topologically, residues 61–69 are extracellular; the sequence is YFGDGRTKD. Residues 70-90 form a helical membrane-spanning segment; that stretch reads PIAYLAELASVASMLGFTIVG. The Cytoplasmic portion of the chain corresponds to 91–138; it reads TLNLWKMLSLKTHFENLLNEFEELFQLIKHRAYRIHHYQEKYTRHIRN. Residues 139–159 traverse the membrane as a helical segment; sequence TFIFHTSAVVYYNSLPILLMI. Topologically, residues 160–208 are extracellular; it reads REHFSNSQQLGYRIQSNTWYPWQVQGSIPGFFAAVACQIFSCQTNMCVN. A helical membrane pass occupies residues 209-229; sequence MFIQFLINFFGIQLEIHFDGL. At 230–269 the chain is on the cytoplasmic side; the sequence is ARQLETIDARNPHAKDQLKYLIVYHTKLLNLADRVNRSFN. Residues 270–290 traverse the membrane as a helical segment; that stretch reads FTFLISLSVSMISNCFLAFSM. Over 291–305 the chain is Extracellular; the sequence is TMFDFGTSLKHLLGL. A helical transmembrane segment spans residues 306 to 326; it reads LLFITYNFSMCRSGTHLILTS. At 327–365 the chain is on the cytoplasmic side; the sequence is GKVLPAAFYNNWYEGDLVYRRMLLILMMRATKPYMWKTY. Residues 366–386 traverse the membrane as a helical segment; it reads KLAPVSITTYMATLKFSYQMF. Over 387 to 393 the chain is Extracellular; that stretch reads TCVRSLK.

It belongs to the insect chemoreceptor superfamily. Heteromeric odorant receptor channel (TC 1.A.69) family. Or49a subfamily. Interacts with Orco. Complexes exist early in the endomembrane system in olfactory sensory neurons (OSNs), coupling these complexes to the conserved ciliary trafficking pathway. In terms of tissue distribution, expressed in olfactory sensory neurons in the antenna.

It is found in the cell membrane. Functionally, odorant receptor which mediates acceptance or avoidance behavior, depending on its substrates. The odorant receptor repertoire encodes a large collection of odor stimuli that vary widely in identity, intensity, and duration. May form a complex with Orco to form odorant-sensing units, providing sensitive and prolonged odorant signaling and calcium permeability. This Drosophila melanogaster (Fruit fly) protein is Putative odorant receptor 69a, isoform B (Or69a).